Here is a 367-residue protein sequence, read N- to C-terminus: Aldo-keto reductase AMT2 (367 aa).

Residue aspartate 76 coordinates NADP(+). Catalysis depends on tyrosine 81, which acts as the Proton donor. Histidine 173 lines the substrate pocket. NADP(+)-binding positions include 203 to 204, glutamine 229, 258 to 268, and 330 to 338; these read SS, GPLAAGKLARP, and SSVERMDEV. The disordered stretch occupies residues 346–367; sequence LSDEEESRLEDPYKAQPPQGHS.

It belongs to the aldo/keto reductase family.

Its pathway is mycotoxin biosynthesis. Its function is as follows. Aldo-keto reductase; part of the gene clusters that mediate the biosynthesis of AM-toxins, host-selective toxins (HSTs) causing Alternaria blotch on apple, a worldwide distributed disease. AM-toxins are cyclic depsipeptides containing the 3 residues 2-hydroxy-isovaleric acid (2-HIV), dehydroalanine, L-alanine which are common for all 3 AM-toxins I to III. The fourth precursor is L-alpha-amino-methoxyphenyl-valeric acid (L-Amv) for AM-toxin I, L-alpha-amino-phenyl-valeric acid (L-Apv) for AM-toxin II, and L-alpha-amino-hydroxyphenyl-valeric acid (L-Ahv) for AM-toxin III. AM-toxins have two target sites for affecting susceptible apple cells; they cause invagination of the plasma membrane and electrolyte loss and chloroplast disorganization. The non-ribosomal peptide synthetase AMT1 contains 4 catalytic modules and is responsible for activation of each residue in AM-toxin. The aldo-keto reductase AMT2 catalyzes the conversion of 2-keto-isovaleric acid (2-KIV) to 2-hydroxy-isovaleric acid (2-HIV), one of the precursor residues incorporated by AMT1 during AM-toxin biosynthesis, by reduction of its ketone to an alcohol. The cytochrome P450 monooxygenase AMT3 and the thioesterase AMT4 are also important for AM-toxin production, but their exact function within the AM-toxin biosynthesis are not known yet. Up to 21 proteins (including AMT1 to AMT4) are predicted to be involved in AM-toxin biosynthesis since their expression ishighly up-regulated in AM-toxin-producing cultures. This is Aldo-keto reductase AMT2 from Alternaria alternata (Alternaria rot fungus).